A 505-amino-acid chain; its full sequence is L-carnitine/gamma-butyrobetaine antiporter (505 aa).

Transmembrane regions (helical) follow at residues 10 to 30 (IEPKVFFPPLIIVGILCWLTV), 51 to 71 (WGWAFEWYMVVMLFGWFWLVF), 92 to 112 (IFMMFASCTSAAVLFWGSIEI), 143 to 163 (GPLPWATYSFLSVAFAYFFFV), 195 to 215 (FYLVALIFAMGTSLGLATPLV), 231 to 251 (LDAIIITCWIILNAICVACGL), 263 to 283 (SYLSFLMLGWVFIVSGASFIM), 316 to 336 (WTVFYWAWWVIYAIQMSIFLA), 347 to 367 (LCFGMVMGLTASTWILWTVLG), 403 to 423 (LSTATMWGFFILCFIATVTLI), 446 to 466 (LLVRIGWSVLVGIIGIVLLAL), and 475 to 495 (AIIAGGCPLFFINIMVTLSFI).

It belongs to the BCCT transporter (TC 2.A.15) family. CaiT subfamily. As to quaternary structure, homotrimer.

The protein localises to the cell inner membrane. The catalysed reaction is 4-(trimethylamino)butanoate(in) + (R)-carnitine(out) = 4-(trimethylamino)butanoate(out) + (R)-carnitine(in). It functions in the pathway amine and polyamine metabolism; carnitine metabolism. Its function is as follows. Catalyzes the exchange of L-carnitine for gamma-butyrobetaine. The polypeptide is L-carnitine/gamma-butyrobetaine antiporter (Salmonella choleraesuis (strain SC-B67)).